The sequence spans 644 residues: Exoribonuclease 2 (644 aa).

The 328-residue stretch at 189-516 (REDLTALNFV…NHRLLKAIIA (328 aa)) folds into the RNB domain. The S1 motif domain occupies 561 to 643 (DERFNAEIID…ETRSVIARPA (83 aa)).

Belongs to the RNR ribonuclease family. RNase II subfamily.

Its subcellular location is the cytoplasm. The catalysed reaction is Exonucleolytic cleavage in the 3'- to 5'-direction to yield nucleoside 5'-phosphates.. In terms of biological role, involved in mRNA degradation. Hydrolyzes single-stranded polyribonucleotides processively in the 3' to 5' direction. This Serratia proteamaculans (strain 568) protein is Exoribonuclease 2.